Here is a 403-residue protein sequence, read N- to C-terminus: Phosphoglycerate kinase (403 aa).

Residues 24–26 (DLN), arginine 39, 62–65 (HLGR), arginine 121, and arginine 161 each bind substrate. ATP-binding positions include lysine 211, glycine 299, glutamate 330, and 359-362 (GGDS).

It belongs to the phosphoglycerate kinase family. Monomer.

It localises to the cytoplasm. The enzyme catalyses (2R)-3-phosphoglycerate + ATP = (2R)-3-phospho-glyceroyl phosphate + ADP. It participates in carbohydrate degradation; glycolysis; pyruvate from D-glyceraldehyde 3-phosphate: step 2/5. This chain is Phosphoglycerate kinase, found in Corynebacterium jeikeium (strain K411).